The sequence spans 82 residues: Delta-ctenitoxin-Pn1a (82 aa).

A signal peptide spans 1–16 (MKVAIVFLSLLVLAFA). A propeptide spanning residues 17-34 (SESIEENREEFPVEESAR) is cleaved from the precursor. 5 disulfide bridges follow: C35–C49, C42–C55, C46–C82, C48–C65, and C57–C63.

It belongs to the neurotoxin 03 (Tx2) family. 05 subfamily. In terms of tissue distribution, expressed by the venom gland.

The protein resides in the secreted. Functionally, this neurotoxin binds at site 3 of insect voltage-activated sodium channels (Nav) and prolongs evoked axonal action potentials by a slowing down of sodium current inactivation. The toxin also inhibits glutamate uptake from rat brain synaptosomes. It reversibly inhibits the N-methyl-D-aspartate (NMDA)-subtype of ionotropic glutamate receptor (GRIN). In addition, the toxin shows antinociceptive effect in all rat pain models tested (inflammatory, neuropathic and nociceptive). The antinociceptive effect is partially blocked when selective antagonists of both mu- and delta-opioid receptors are administered, revealing that the antinociceptive effect of the toxin involves both opioid and cannabinoid endogenous systems. In vivo, it is highly toxic to house fly (Musca domestica), toxic to cockroach, but has no effect when intracerebroventricularly injected into mice. The chain is Delta-ctenitoxin-Pn1a from Phoneutria nigriventer (Brazilian armed spider).